We begin with the raw amino-acid sequence, 561 residues long: DNA ligase B (561 aa).

Lys125 acts as the N6-AMP-lysine intermediate in catalysis.

Belongs to the NAD-dependent DNA ligase family. LigB subfamily.

The catalysed reaction is NAD(+) + (deoxyribonucleotide)n-3'-hydroxyl + 5'-phospho-(deoxyribonucleotide)m = (deoxyribonucleotide)n+m + AMP + beta-nicotinamide D-nucleotide.. Its function is as follows. Catalyzes the formation of phosphodiester linkages between 5'-phosphoryl and 3'-hydroxyl groups in double-stranded DNA using NAD as a coenzyme and as the energy source for the reaction. In Salmonella paratyphi A (strain AKU_12601), this protein is DNA ligase B.